The sequence spans 323 residues: MNTQKPFENHLKSVDDLKTTYEEYRAGFIAFALEKNKRSTPYIERARALKVAASVAKTPKDLLYLEDIQDALLYASGISDKAKKFLTEDDKKESINNLIENFLEPAGEEFIDELIFRYLLFQGDSLGGTMRNIAGALAQQKLTRAIISALDIANIPYKWLDSRDKKYTNWMDKPEDDYELETFAKGISWTINGKHRTLMYNITVPLVKKNVDICLFNCEPEIYTPQKVHQQPEKYLLLGELKGGIDPAGADEHWKTANTALTRIRNKFSEKGLSPKTIFIGAAIEHSMAEEIWDQLQSGSLTNSANLTKTEQVGSLCRWIINI.

Mg(2+) is bound by residues aspartate 212, glutamate 240, and lysine 242.

As to quaternary structure, homodimer.

The enzyme catalyses Endonucleolytic cleavage of DNA to give specific double-stranded fragments with terminal 5'-phosphates.. A P subtype restriction enzyme that recognizes the double-stranded sequence 5'-CYCGRG-3' and cleaves after C-1. This chain is Type II restriction enzyme BsoBI, found in Geobacillus stearothermophilus (Bacillus stearothermophilus).